Here is a 313-residue protein sequence, read N- to C-terminus: MSDVENASLPPAIFIMGPTASGKTALAMTLREYLPVELISVDSALIYKDMDIGTAKPSADELARAPHRLIDILDPTESYSAADFRRDALREMADITAAGRIPLLVGGTMLYFKALLEGLSPLPPADAAVRQRIEEQAKEIGWEAMHRQLSEIDPTAAIRIHPNDPQRLSRALEVFFISGNTLTELTKTSGDALPYQVHQFAIAPAMRELLHQRIEQRFHQMLAAGFETEARALFARHDLHTDMPSIRCVGYRQMWSYLSGEIDYDEMVYRGVCATRQLAKRQMTWLRGWDDVCWLDSENPTEALDKVIQVVSA.

17–24 (GPTASGKT) contacts ATP. A substrate-binding site is contributed by 19–24 (TASGKT). Interaction with substrate tRNA stretches follow at residues 42–45 (DSAL), 166–170 (QRLSR), and 247–252 (RCVGYR).

It belongs to the IPP transferase family. As to quaternary structure, monomer. It depends on Mg(2+) as a cofactor.

The enzyme catalyses adenosine(37) in tRNA + dimethylallyl diphosphate = N(6)-dimethylallyladenosine(37) in tRNA + diphosphate. Its function is as follows. Catalyzes the transfer of a dimethylallyl group onto the adenine at position 37 in tRNAs that read codons beginning with uridine, leading to the formation of N6-(dimethylallyl)adenosine (i(6)A). The sequence is that of tRNA dimethylallyltransferase from Pectobacterium atrosepticum (strain SCRI 1043 / ATCC BAA-672) (Erwinia carotovora subsp. atroseptica).